The sequence spans 447 residues: Glutamate--tRNA ligase 1 (447 aa).

The 'HIGH' region motif lies at 10–20; sequence PSPTGMLHVGN. Positions 240-244 match the 'KMSKS' region motif; that stretch reads KISKR. Lysine 243 is a binding site for ATP.

Belongs to the class-I aminoacyl-tRNA synthetase family. Glutamate--tRNA ligase type 1 subfamily. As to quaternary structure, monomer.

It is found in the cytoplasm. It carries out the reaction tRNA(Glu) + L-glutamate + ATP = L-glutamyl-tRNA(Glu) + AMP + diphosphate. Catalyzes the attachment of glutamate to tRNA(Glu) in a two-step reaction: glutamate is first activated by ATP to form Glu-AMP and then transferred to the acceptor end of tRNA(Glu). This chain is Glutamate--tRNA ligase 1, found in Rickettsia massiliae (strain Mtu5).